Consider the following 195-residue polypeptide: uncharacterized protein (195 aa).

The N-terminal stretch at 1-21 is a signal peptide; that stretch reads MHFSSCVLVSALAIVTNVATA. N-linked (GlcNAc...) asparagine glycans are attached at residues asparagine 62 and asparagine 109. The interval 119–141 is disordered; it reads DWDEDTVTGENAPDSGEPFSTSH.

The protein localises to the secreted. This is an uncharacterized protein from Arthroderma benhamiae (strain ATCC MYA-4681 / CBS 112371) (Trichophyton mentagrophytes).